A 447-amino-acid chain; its full sequence is N-succinylarginine dihydrolase (447 aa).

Substrate-binding positions include 19 to 28 (GGLAVGNIAS), Asn-110, and 137 to 138 (HR). Glu-174 is a catalytic residue. Arg-213 contacts substrate. His-249 is an active-site residue. 2 residues coordinate substrate: Asp-251 and Asn-362. Cys-368 functions as the Nucleophile in the catalytic mechanism.

It belongs to the succinylarginine dihydrolase family. Homodimer.

It carries out the reaction N(2)-succinyl-L-arginine + 2 H2O + 2 H(+) = N(2)-succinyl-L-ornithine + 2 NH4(+) + CO2. It participates in amino-acid degradation; L-arginine degradation via AST pathway; L-glutamate and succinate from L-arginine: step 2/5. In terms of biological role, catalyzes the hydrolysis of N(2)-succinylarginine into N(2)-succinylornithine, ammonia and CO(2). This Nitrosospira multiformis (strain ATCC 25196 / NCIMB 11849 / C 71) protein is N-succinylarginine dihydrolase.